A 67-amino-acid chain; its full sequence is MPKLKTRKAAAKRFRATGSGNKIFRRKAYKNHLLYHKSAERKRRRLSGLALVSEEDIKEVRLMLPYL.

The protein belongs to the bacterial ribosomal protein bL35 family.

This Gloeothece citriformis (strain PCC 7424) (Cyanothece sp. (strain PCC 7424)) protein is Large ribosomal subunit protein bL35.